Reading from the N-terminus, the 316-residue chain is Protein lifeguard 2 (316 aa).

Positions 1–46 (MTQGKLSVANKAPGTEGQQQANGEKKETPAVPSAPPSYEEATSGEG) are disordered. A run of 3 helical transmembrane segments spans residues 106-126 (VYTILLIQLLVTLGVVALFTF), 138-158 (PGWYWASYAVFFATYLTLACC), and 165-185 (FPWNLILLTIFTLSMAYLTGM). Residue Asn-191 is glycosylated (N-linked (GlcNAc...) asparagine). Transmembrane regions (helical) follow at residues 194–214 (SVLLCLSITALVCLSVTVFSF), 225–245 (GVLFVLLMTLFFSGLILAILL), 251–271 (PWLHAVYAVLGAGVFTLFLAF), and 290–310 (IFGALNIYLDIIYIFTFFLQL).

Belongs to the BI1 family. LFG subfamily. In terms of assembly, interacts with FAS/TNFRSF6 and BAX.

Its subcellular location is the cell membrane. It localises to the membrane raft. The protein localises to the postsynaptic cell membrane. In terms of biological role, antiapoptotic protein which protects cells uniquely from Fas-induced apoptosis. Regulates Fas-mediated apoptosis in neurons by interfering with caspase-8 activation. Plays a role in cerebellar development by affecting cerebellar size, internal granular layer (IGL) thickness, and Purkinje cell (PC) development. The polypeptide is Protein lifeguard 2 (FAIM2) (Bos taurus (Bovine)).